The sequence spans 242 residues: Beta-carotene ketolase (242 aa).

The catalysed reaction is all-trans-beta-carotene + 2 AH2 + 2 O2 = echinenone + 2 A + 3 H2O. The enzyme catalyses echinenone + 2 AH2 + 2 O2 = canthaxanthin + 2 A + 3 H2O. It functions in the pathway carotenoid biosynthesis; astaxanthin biosynthesis. Functionally, converts beta-carotene to canthaxanthin via echinenone. The protein is Beta-carotene ketolase (crtW) of Paracoccus sp. (strain N81106 / MBIC 01143) (Agrobacterium aurantiacum).